Reading from the N-terminus, the 721-residue chain is Polyribonucleotide nucleotidyltransferase (721 aa).

Residues Asp-495 and Asp-501 each contribute to the Mg(2+) site. In terms of domain architecture, KH spans 562–621; that stretch reads PRLLSFRIDPELIGTVIGPGGRTIKGITERTNTKIDIEDSGIVTIASHDGAAAEEAQKII. The 69-residue stretch at 631-699 folds into the S1 motif domain; sequence GEMFSGSITR…NRGRINLTLR (69 aa). A disordered region spans residues 700–721; it reads GVPQSGESTEVEPQPTPVAPLS.

Belongs to the polyribonucleotide nucleotidyltransferase family. Mg(2+) serves as cofactor.

The protein localises to the cytoplasm. It catalyses the reaction RNA(n+1) + phosphate = RNA(n) + a ribonucleoside 5'-diphosphate. Involved in mRNA degradation. Catalyzes the phosphorolysis of single-stranded polyribonucleotides processively in the 3'- to 5'-direction. This chain is Polyribonucleotide nucleotidyltransferase, found in Synechococcus sp. (strain CC9902).